The sequence spans 145 residues: Protein X (145 aa).

Residues 68 to 117 (PCALRFTSARRMETTVNAHQVLPKVLHKRTLGLSAMSTTDLEAYFKDCVF) form a mitochondrial targeting sequence region.

Belongs to the orthohepadnavirus protein X family. May form homodimer. May interact with host CEBPA, CFLAR, CREB1, DDB1, E4F1, HBXIP, HSPD1/HSP60, NFKBIA, POLR2E and SMAD4. Interacts with host SMC5-SMC6 complex and induces its degradation. Interacts with host TRPC4AP; leading to prevent ubiquitination of TRPC4AP. Interacts with host PLSCR1; this interaction promotes ubiquitination and degradation of HBx and impairs HBx-mediated cell proliferation. A fraction may be phosphorylated in insect cells and HepG2 cells, a human hepatoblastoma cell line. Phosphorylated in vitro by host protein kinase C or mitogen-activated protein kinase. N-acetylated in insect cells.

It localises to the host cytoplasm. It is found in the host nucleus. Its subcellular location is the host mitochondrion. Multifunctional protein that plays a role in silencing host antiviral defenses and promoting viral transcription. Does not seem to be essential for HBV infection. May be directly involved in development of cirrhosis and liver cancer (hepatocellular carcinoma). Most of cytosolic activities involve modulation of cytosolic calcium. The effect on apoptosis is controversial depending on the cell types in which the studies have been conducted. May induce apoptosis by localizing in mitochondria and causing loss of mitochondrial membrane potential. May also modulate apoptosis by binding host CFLAR, a key regulator of the death-inducing signaling complex (DISC). Promotes viral transcription by using the host E3 ubiquitin ligase DDB1 to target the SMC5-SMC6 complex to proteasomal degradation. This host complex would otherwise bind to viral episomal DNA, and prevents its transcription. Moderately stimulates transcription of many different viral and cellular transcription elements. Promoters and enhancers stimulated by HBx contain DNA binding sites for NF-kappa-B, AP-1, AP-2, c-EBP, ATF/CREB, or the calcium-activated factor NF-AT. This chain is Protein X, found in Homo sapiens (Human).